Reading from the N-terminus, the 1387-residue chain is DNA-directed RNA polymerase subunit beta (1387 aa).

It belongs to the RNA polymerase beta chain family. The RNAP catalytic core consists of 2 alpha, 1 beta, 1 beta' and 1 omega subunit. When a sigma factor is associated with the core the holoenzyme is formed, which can initiate transcription.

It catalyses the reaction RNA(n) + a ribonucleoside 5'-triphosphate = RNA(n+1) + diphosphate. DNA-dependent RNA polymerase catalyzes the transcription of DNA into RNA using the four ribonucleoside triphosphates as substrates. This is DNA-directed RNA polymerase subunit beta from Xanthomonas campestris pv. campestris (strain ATCC 33913 / DSM 3586 / NCPPB 528 / LMG 568 / P 25).